The chain runs to 154 residues: Xanthine-guanine phosphoribosyltransferase (154 aa).

5-phospho-alpha-D-ribose 1-diphosphate is bound by residues 37-38 (RG), Arg-69, and 88-96 (EDLVDSGDT). GMP is bound at residue Arg-69. Asp-89 contributes to the Mg(2+) binding site. Asp-92 and Ile-135 together coordinate guanine. 2 residues coordinate xanthine: Asp-92 and Ile-135. GMP-binding positions include 92–96 (DSGDT) and 134–135 (WI).

The protein belongs to the purine/pyrimidine phosphoribosyltransferase family. XGPT subfamily. Homotetramer. Mg(2+) is required as a cofactor.

Its subcellular location is the cell inner membrane. It carries out the reaction GMP + diphosphate = guanine + 5-phospho-alpha-D-ribose 1-diphosphate. It catalyses the reaction XMP + diphosphate = xanthine + 5-phospho-alpha-D-ribose 1-diphosphate. The catalysed reaction is IMP + diphosphate = hypoxanthine + 5-phospho-alpha-D-ribose 1-diphosphate. It functions in the pathway purine metabolism; GMP biosynthesis via salvage pathway; GMP from guanine: step 1/1. It participates in purine metabolism; XMP biosynthesis via salvage pathway; XMP from xanthine: step 1/1. In terms of biological role, purine salvage pathway enzyme that catalyzes the transfer of the ribosyl-5-phosphate group from 5-phospho-alpha-D-ribose 1-diphosphate (PRPP) to the N9 position of the 6-oxopurines guanine and xanthine to form the corresponding ribonucleotides GMP (guanosine 5'-monophosphate) and XMP (xanthosine 5'-monophosphate), with the release of PPi. To a lesser extent, also acts on hypoxanthine. In Vibrio vulnificus (strain CMCP6), this protein is Xanthine-guanine phosphoribosyltransferase.